We begin with the raw amino-acid sequence, 175 residues long: Ribosome maturation factor RimM (175 aa).

Residues 96-175 (EDEFYWRELF…RIEVDWDPGF (80 aa)) form the PRC barrel domain.

The protein belongs to the RimM family. Binds ribosomal protein uS19.

It is found in the cytoplasm. Its function is as follows. An accessory protein needed during the final step in the assembly of 30S ribosomal subunit, possibly for assembly of the head region. Essential for efficient processing of 16S rRNA. May be needed both before and after RbfA during the maturation of 16S rRNA. It has affinity for free ribosomal 30S subunits but not for 70S ribosomes. The sequence is that of Ribosome maturation factor RimM from Aliivibrio fischeri (strain ATCC 700601 / ES114) (Vibrio fischeri).